A 475-amino-acid chain; its full sequence is Chromosomal replication initiator protein DnaA (475 aa).

The tract at residues 1–73 is domain I, interacts with DnaA modulators; it reads MSDTEQERWS…LSCWQAELPD (73 aa). A domain II region spans residues 73–131; it reads DVHRIDLTVRSAMRCAAPVREAPATDARHPERSEGRNGVELKTVATAPASANHDALGGS. The tract at residues 132–354 is domain III, AAA+ region; the sequence is PLDPRLTFQS…GAINRLLAHS (223 aa). ATP is bound by residues glycine 179, glycine 181, lysine 182, and threonine 183. Positions 355-475 are domain IV, binds dsDNA; sequence KLNAQPVTLE…VELLKRQLQE (121 aa).

Belongs to the DnaA family. Oligomerizes as a right-handed, spiral filament on DNA at oriC.

The protein resides in the cytoplasm. In terms of biological role, plays an essential role in the initiation and regulation of chromosomal replication. ATP-DnaA binds to the origin of replication (oriC) to initiate formation of the DNA replication initiation complex once per cell cycle. Binds the DnaA box (a 9 base pair repeat at the origin) and separates the double-stranded (ds)DNA. Forms a right-handed helical filament on oriC DNA; dsDNA binds to the exterior of the filament while single-stranded (ss)DNA is stabiized in the filament's interior. The ATP-DnaA-oriC complex binds and stabilizes one strand of the AT-rich DNA unwinding element (DUE), permitting loading of DNA polymerase. After initiation quickly degrades to an ADP-DnaA complex that is not apt for DNA replication. Binds acidic phospholipids. In Nitrobacter winogradskyi (strain ATCC 25391 / DSM 10237 / CIP 104748 / NCIMB 11846 / Nb-255), this protein is Chromosomal replication initiator protein DnaA.